The sequence spans 571 residues: FAD-linked oxidoreductase patO (571 aa).

An N-terminal signal peptide occupies residues 1–23 (MRLHQSPPRLLVCILSVLQVSAG). Residues Asn-47, Asn-101, Asn-125, Asn-179, Asn-341, Asn-374, Asn-380, Asn-421, Asn-445, and Asn-480 are each glycosylated (N-linked (GlcNAc...) asparagine). One can recognise an FAD-binding PCMH-type domain in the interval 115-294 (TLGAMVRYAV…YAVTVKTFPD (180 aa)).

Belongs to the oxygen-dependent FAD-linked oxidoreductase family. The cofactor is FAD.

The protein resides in the vacuole lumen. It participates in mycotoxin biosynthesis; patulin biosynthesis. Functionally, FAD-linked oxidoreductase; part of the gene cluster that mediates the biosynthesis of patulin, an acetate-derived tetraketide mycotoxin produced by several fungal species that shows antimicrobial properties against several bacteria. PatO acts with patJ in the vacuole to convert gentisyl alcohol to isoepoxydon. The pathway begins with the synthesis of 6-methylsalicylic acid by the polyketide synthase (PKS) patK via condensation of acetate and malonate units. The 6-methylsalicylic acid decarboxylase patG then catalyzes the decarboxylation of 6-methylsalicylic acid to yield m-cresol (also known as 3-methylphenol). These first reactions occur in the cytosol. The intermediate m-cresol is then transported into the endoplasmic reticulum where the cytochrome P450 monooxygenase patH converts it to m-hydroxybenzyl alcohol, which is further converted to gentisyl alcohol by the cytochrome P450 monooxygenase patI. The oxidoreductases patJ and patO further convert gentisyl alcohol to isoepoxydon in the vacuole. PatN catalyzes then the transformation of isoepoxydon into phyllostine. The cluster protein patF is responsible for the conversion from phyllostine to neopatulin whereas the alcohol dehydrogenase patD converts neopatulin to E-ascladiol. The steps between isoepoxydon and E-ascladiol occur in the cytosol, and E-ascladiol is probably secreted to the extracellular space by one of the cluster-specific transporters patC or patM. Finally, the secreted patulin synthase patE catalyzes the conversion of E-ascladiol to patulin. The chain is FAD-linked oxidoreductase patO from Penicillium expansum (Blue mold rot fungus).